A 163-amino-acid polypeptide reads, in one-letter code: Endoribonuclease YbeY (163 aa).

Zn(2+) is bound by residues H123, H127, and H133.

Belongs to the endoribonuclease YbeY family. The cofactor is Zn(2+).

The protein localises to the cytoplasm. Single strand-specific metallo-endoribonuclease involved in late-stage 70S ribosome quality control and in maturation of the 3' terminus of the 16S rRNA. The sequence is that of Endoribonuclease YbeY from Helicobacter hepaticus (strain ATCC 51449 / 3B1).